The primary structure comprises 473 residues: Bifunctional protein HldE (473 aa).

Positions 1–318 (MKLSMPRFDQ…RAIQREEGSE (318 aa)) are ribokinase. An ATP-binding site is contributed by 194–197 (NLSE). Residue aspartate 263 is part of the active site. Positions 343–473 (FTNGCFDILH…TAIVEKIRKH (131 aa)) are cytidylyltransferase.

This sequence in the N-terminal section; belongs to the carbohydrate kinase PfkB family. It in the C-terminal section; belongs to the cytidylyltransferase family. Homodimer.

The enzyme catalyses D-glycero-beta-D-manno-heptose 7-phosphate + ATP = D-glycero-beta-D-manno-heptose 1,7-bisphosphate + ADP + H(+). It carries out the reaction D-glycero-beta-D-manno-heptose 1-phosphate + ATP + H(+) = ADP-D-glycero-beta-D-manno-heptose + diphosphate. It participates in nucleotide-sugar biosynthesis; ADP-L-glycero-beta-D-manno-heptose biosynthesis; ADP-L-glycero-beta-D-manno-heptose from D-glycero-beta-D-manno-heptose 7-phosphate: step 1/4. The protein operates within nucleotide-sugar biosynthesis; ADP-L-glycero-beta-D-manno-heptose biosynthesis; ADP-L-glycero-beta-D-manno-heptose from D-glycero-beta-D-manno-heptose 7-phosphate: step 3/4. In terms of biological role, catalyzes the phosphorylation of D-glycero-D-manno-heptose 7-phosphate at the C-1 position to selectively form D-glycero-beta-D-manno-heptose-1,7-bisphosphate. Catalyzes the ADP transfer from ATP to D-glycero-beta-D-manno-heptose 1-phosphate, yielding ADP-D-glycero-beta-D-manno-heptose. In Pseudomonas entomophila (strain L48), this protein is Bifunctional protein HldE.